Here is a 440-residue protein sequence, read N- to C-terminus: C4-dicarboxylate transport protein (440 aa).

9 helical membrane passes run 7–29 (LYKSLYVQVLVAITIGILLGHYY), 49–66 (MVIAPIIFCTVVSGIAGM), 79–101 (ALLYFEIVSTIALIIGLVVVNVV), 143–165 (VVGAFANGDILQVLMFSVLFGFA), 186–208 (VMFNIINMIMKLAPIGAFGAMAF), 221–243 (LGYLMACFYITCLLFVLVVLGGI), 291–313 (VVGLVIPTGYSFNLDGTSIYLTM), 328–350 (ITHQITLLLVLLVASKGAAGVTG), and 355–377 (VLAATLSAVGHLPVAGLALILGI). A disordered region spans residues 419 to 440 (GGAPLIDTRPTDDLGVAEGPAR).

This sequence belongs to the dicarboxylate/amino acid:cation symporter (DAACS) (TC 2.A.23) family.

The protein localises to the cell inner membrane. In terms of biological role, responsible for the transport of dicarboxylates such as succinate, fumarate, and malate from the periplasm across the membrane. The protein is C4-dicarboxylate transport protein of Pseudomonas putida (strain ATCC 47054 / DSM 6125 / CFBP 8728 / NCIMB 11950 / KT2440).